The following is a 111-amino-acid chain: Large ribosomal subunit protein bL20c (111 aa).

This sequence belongs to the bacterial ribosomal protein bL20 family.

The protein resides in the plastid. Its subcellular location is the chloroplast. Its function is as follows. Binds directly to 23S ribosomal RNA and is necessary for the in vitro assembly process of the 50S ribosomal subunit. It is not involved in the protein synthesizing functions of that subunit. This Ostreococcus tauri protein is Large ribosomal subunit protein bL20c.